A 174-amino-acid chain; its full sequence is Peptide methionine sulfoxide reductase MsrA (174 aa).

Residue C11 is part of the active site.

Belongs to the MsrA Met sulfoxide reductase family.

It catalyses the reaction L-methionyl-[protein] + [thioredoxin]-disulfide + H2O = L-methionyl-(S)-S-oxide-[protein] + [thioredoxin]-dithiol. The catalysed reaction is [thioredoxin]-disulfide + L-methionine + H2O = L-methionine (S)-S-oxide + [thioredoxin]-dithiol. In terms of biological role, has an important function as a repair enzyme for proteins that have been inactivated by oxidation. Catalyzes the reversible oxidation-reduction of methionine sulfoxide in proteins to methionine. In Haloquadratum walsbyi (strain DSM 16790 / HBSQ001), this protein is Peptide methionine sulfoxide reductase MsrA.